We begin with the raw amino-acid sequence, 261 residues long: Small ribosomal subunit protein uS3 (261 aa).

In terms of domain architecture, KH type-2 spans 39-107 (VREYLKRKLA…PVHVSIEEIR (69 aa)). Positions 213–261 (QPVAEEPAADDRRPRRTPGRPDGDKPRTRTVKKVDGAADPAKRVRKAGA) are disordered. Basic and acidic residues predominate over residues 221 to 254 (ADDRRPRRTPGRPDGDKPRTRTVKKVDGAADPAK).

This sequence belongs to the universal ribosomal protein uS3 family. Part of the 30S ribosomal subunit. Forms a tight complex with proteins S10 and S14.

Binds the lower part of the 30S subunit head. Binds mRNA in the 70S ribosome, positioning it for translation. The sequence is that of Small ribosomal subunit protein uS3 from Dechloromonas aromatica (strain RCB).